Consider the following 127-residue polypeptide: MSDITKEQVVEFIAGMTVLELSEFIKELEEKFGVSAAAPVAAMAAAPAEAAAPAEEEKTEFDVILKSPGANKIAVIKVVRALTGLGLKEAKEKVDGTPSTLKEAVSKDDAEEAAKQLKEAGAEVEVK.

Residues 96-127 (GTPSTLKEAVSKDDAEEAAKQLKEAGAEVEVK) are disordered. Positions 104–127 (AVSKDDAEEAAKQLKEAGAEVEVK) are enriched in basic and acidic residues.

Belongs to the bacterial ribosomal protein bL12 family. In terms of assembly, homodimer. Part of the ribosomal stalk of the 50S ribosomal subunit. Forms a multimeric L10(L12)X complex, where L10 forms an elongated spine to which 2 to 4 L12 dimers bind in a sequential fashion. Binds GTP-bound translation factors.

In terms of biological role, forms part of the ribosomal stalk which helps the ribosome interact with GTP-bound translation factors. Is thus essential for accurate translation. This chain is Large ribosomal subunit protein bL12, found in Oleidesulfovibrio alaskensis (strain ATCC BAA-1058 / DSM 17464 / G20) (Desulfovibrio alaskensis).